Here is a 36-residue protein sequence, read N- to C-terminus: Turgencin-A (36 aa).

Intrachain disulfides connect cysteine 8/cysteine 33, cysteine 12/cysteine 29, and cysteine 17/cysteine 26. Methionine 10 bears the Methionine sulfoxide mark. Valine 36 is subject to Valine amide.

It is found in the secreted. Has antimicrobial activity against Gram-positive bacteria (C.glutamicum ATCC 13032 (MIC=0.4 uM), B.subtilis ATCC 23857 (MIC=0.4 uM) and S.aureus ATCC 9144 (MIC=6.3 uM)) and Gram-negative bacteria (E.coli ATCC 25922 (MIC=0.8 uM) and P.aeruginosa ATCC 27853 (MIC=1.6 uM)). The chain is Turgencin-A from Synoicum turgens (Colonial ascidian).